The chain runs to 320 residues: MAGVELFSHPALHTRYRAGLCSAAALALLLIAVLTYVPPLLVAYRSHGFWLKQSAYREQPTVRFRYELLFVATTGPGPGSFLAWSTFPAFNRLQEDRLRVPLLSTREEDKNQDGKMDQLHFKLELPLQPTEHVVGVQLILIFSYQLYRMSTFVMQSMAFLQFFSPVPGSQLYANGDLKLNQRQLLNHCGLDTRYNVSVVNGTSPFASDYDLKNIIAAYRDRNVTTVFSDSNPIWMTGRGANTPFIVNATIRYPVEVILYQPGFWETIKFAWIQYVSILLIFLWVFGRIKMFVFQNQVFATTPVSPVLPLSPVLSYKQHQP.

Residues 23–43 (AAALALLLIAVLTYVPPLLVA) traverse the membrane as a helical segment. Residues Asn195, Asn200, and Asn222 are each glycosylated (N-linked (GlcNAc...) asparagine). A helical membrane pass occupies residues 266–286 (TIKFAWIQYVSILLIFLWVFG).

This sequence belongs to the TMEM231 family. Part of the tectonic-like complex (also named B9 complex).

It is found in the cell projection. It localises to the cilium membrane. Functionally, transmembrane component of the tectonic-like complex, a complex localized at the transition zone of primary cilia and acting as a barrier that prevents diffusion of transmembrane proteins between the cilia and plasma membranes. Required for ciliogenesis and sonic hedgehog/SHH signaling. In Gallus gallus (Chicken), this protein is Transmembrane protein 231 (TMEM231).